Consider the following 50-residue polypeptide: Sperm protamine P1 (50 aa).

It belongs to the protamine P1 family. Cross-linked by interchain disulfide bonds around the DNA-helix. Testis.

It localises to the nucleus. It is found in the chromosome. Its function is as follows. Protamines substitute for histones in the chromatin of sperm during the haploid phase of spermatogenesis. They compact sperm DNA into a highly condensed, stable and inactive complex. The sequence is that of Sperm protamine P1 (PRM1) from Saguinus imperator (Emperor tamarin).